Here is a 431-residue protein sequence, read N- to C-terminus: MFSTLKNAFKDKEIRNKIYFTLFILLLYRIGANITVPGINVKAITQVAQTGLVPMLDTVSGGGLDNYSIFSLGVSPYITAQIVIQLLQMDIVPTLVEWGKQGEVGRRKTNQVTRYLTLVVAFVQSIGITLGFNALTQMGLVKNQTPQTYVEIAIIMTAGTMLLTWLGDEITDKGLGNGVSVIIFAGIIARLPSGLYQIYKEEIINNSASDRWQGILFFIAVIVAILIVTQLVTWVEQADRRIPIQYTRRATISGSESFLPLKVNVSGVIPVIFASSFIVTPATILMAFQRTQGDQQWFKVMNQIFSLQTTPGVIIYTLLIILFTFFYAFVQVNPEKLAENLQKQGAYIPSVWPGKDTQDYVSKMLIKLSTVGSIFLGLVALLPQLATNFWNLPSSIGLGGTSLLIVIGVVLELSRQINGLLMKREYVGFIR.

Helical transmembrane passes span 18–38, 67–87, 115–135, 150–170, 178–198, 215–235, 268–288, 312–332, 365–385, and 392–412; these read IYFT…TVPG, YSIF…IQLL, YLTL…FNAL, VEIA…GDEI, GVSV…LYQI, ILFF…VTWV, VIPV…LMAF, GVII…FVQV, LIKL…LPQL, and LPSS…VVLE.

The protein belongs to the SecY/SEC61-alpha family. Component of the Sec protein translocase complex. Heterotrimer consisting of SecY, SecE and SecG subunits. The heterotrimers can form oligomers, although 1 heterotrimer is thought to be able to translocate proteins. Interacts with the ribosome. Interacts with SecDF, and other proteins may be involved. Interacts with SecA.

The protein localises to the cell membrane. In terms of biological role, the central subunit of the protein translocation channel SecYEG. Consists of two halves formed by TMs 1-5 and 6-10. These two domains form a lateral gate at the front which open onto the bilayer between TMs 2 and 7, and are clamped together by SecE at the back. The channel is closed by both a pore ring composed of hydrophobic SecY resides and a short helix (helix 2A) on the extracellular side of the membrane which forms a plug. The plug probably moves laterally to allow the channel to open. The ring and the pore may move independently. This is Protein translocase subunit SecY 1 from Lactobacillus kefiranofaciens subsp. kefiranofaciens.